The following is a 544-amino-acid chain: Spore germination protein KA (544 aa).

Positions M1–I36 are disordered. The segment covering N9–P33 has biased composition (basic and acidic residues). Transmembrane regions (helical) follow at residues F279–F299, V321–H341, A392–S412, V416–I436, and F443–M463. Residues K504–P523 are compositionally biased toward basic and acidic residues. The tract at residues K504–T544 is disordered.

The protein belongs to the GerABKA family.

It is found in the cell membrane. Its function is as follows. Involved in the germination response to the combination of glucose, fructose, L-asparagine, and KCl. In Bacillus subtilis (strain 168), this protein is Spore germination protein KA (gerKA).